A 143-amino-acid polypeptide reads, in one-letter code: Large ribosomal subunit protein uL11 (143 aa).

This sequence belongs to the universal ribosomal protein uL11 family. As to quaternary structure, part of the ribosomal stalk of the 50S ribosomal subunit. Interacts with L10 and the large rRNA to form the base of the stalk. L10 forms an elongated spine to which L12 dimers bind in a sequential fashion forming a multimeric L10(L12)X complex. Post-translationally, one or more lysine residues are methylated.

Its function is as follows. Forms part of the ribosomal stalk which helps the ribosome interact with GTP-bound translation factors. The chain is Large ribosomal subunit protein uL11 from Pseudomonas putida (strain ATCC 700007 / DSM 6899 / JCM 31910 / BCRC 17059 / LMG 24140 / F1).